The chain runs to 168 residues: uncharacterized protein (168 aa).

The next 4 membrane-spanning stretches (helical) occupy residues 1–21 (MFWLLIAILIVQRAAEMAVAR), 41–61 (PYIITMHILFFLSLIAEVLLM), 68–88 (WWLGIAAVILSVQIVRYWALC), and 123–143 (VILEILLIPLLYQAYVTMCLF).

It localises to the cell membrane. This is an uncharacterized protein from Bacillus subtilis (strain 168).